Reading from the N-terminus, the 386-residue chain is MRIFKSHRLLKLVNSYIIDSPQPTNLSYLWNFGSLLALCLGIQIVTGVTLAMHYSPSITDALYSIEHIMRDVNNGWLIRYLHANTASAFFFLVYLHMGRGIYYGSYQGSRSLTWNIGVVIFIVMIVTAFLGYVLPFGQMSLWGATVITNLLSAIPWINQDLVEFIWGGFSVNNATLNRFFSLHYLLPFILAALVLMHLIALHDTVGSSNPLGISGNYDRLPFAPYFLFKDLVTIFLFMLGLSIFVLFMPNALGDCENYVMANPMQTPAAIVPEWYLLPFYAILRSIPDKTLGVVAMLGAILILMALPYLDKSNIRGMQFKPLSKIAFYIFIANFLVLMILGAKHVEDPFIIFGQISTTLYFSYFIIITPLFSIFDNILFDIATKKK.

The next 4 helical transmembrane spans lie at 32 to 52, 76 to 98, 113 to 133, and 179 to 199; these read FGSL…TLAM, WLIR…LHMG, TWNI…LGYV, and FFSL…MHLI. Residues His82 and His96 each contribute to the heme b site. His183 and His197 together coordinate heme b. His202 is a binding site for a ubiquinone. Transmembrane regions (helical) follow at residues 226 to 246, 290 to 310, 322 to 342, and 349 to 369; these read FLFK…IFVL, TLGV…PYLD, LSKI…ILGA, and FIIF…IITP.

Belongs to the cytochrome b family. In terms of assembly, fungal cytochrome b-c1 complex contains 10 subunits; 3 respiratory subunits, 2 core proteins and 5 low-molecular weight proteins. Cytochrome b-c1 complex is a homodimer. The cofactor is heme b.

It is found in the mitochondrion inner membrane. In terms of biological role, component of the ubiquinol-cytochrome c reductase complex (complex III or cytochrome b-c1 complex) that is part of the mitochondrial respiratory chain. The b-c1 complex mediates electron transfer from ubiquinol to cytochrome c. Contributes to the generation of a proton gradient across the mitochondrial membrane that is then used for ATP synthesis. The protein is Cytochrome b (COB) of Trichophyton rubrum (Athlete's foot fungus).